Consider the following 98-residue polypeptide: Gibberellin-regulated protein 1 (98 aa).

Positions 1–23 (MAISKALIASLLISLLVLQLVQA) are cleaved as a signal peptide.

This sequence belongs to the GASA family. Six disulfide bonds may be present. As to expression, expressed in flower buds, style, stamen filaments, vasculature of sepals, flower abscission zone and green siliques. Lower levels seen in the root phloem, cotyledons and vasculature of rosette leaves.

The protein resides in the secreted. Functionally, gibberellin-regulated protein that may function in hormonal controlled steps of development such as seed germination, flowering and seed maturation. The protein is Gibberellin-regulated protein 1 (GASA1) of Arabidopsis thaliana (Mouse-ear cress).